A 289-amino-acid polypeptide reads, in one-letter code: Ribonuclease HII (289 aa).

The interval 1–55 is disordered; the sequence is MIRDQAKTPGRAKSAAAAKASPAAKGGGNEAAQSAAGKAAAKPAAKPATSKSGKG. 2 stretches are compositionally biased toward low complexity: residues 7 to 24 and 31 to 55; these read KTPG…SPAA and AAQS…SGKG. In terms of domain architecture, RNase H type-2 spans 76–264; sequence WPVAGCDEAG…VVAARRKHQP (189 aa). Aspartate 82, glutamate 83, and aspartate 173 together coordinate a divalent metal cation.

Belongs to the RNase HII family. Mn(2+) is required as a cofactor. Mg(2+) serves as cofactor.

It is found in the cytoplasm. It carries out the reaction Endonucleolytic cleavage to 5'-phosphomonoester.. Its function is as follows. Endonuclease that specifically degrades the RNA of RNA-DNA hybrids. This is Ribonuclease HII from Bradyrhizobium sp. (strain BTAi1 / ATCC BAA-1182).